The following is a 114-amino-acid chain: Gonadotropin subunit beta-1 (114 aa).

An N-terminal signal peptide occupies residues 1–19 (MQLVLMAAVLALAEVGCFG). Disulfide bonds link cysteine 20-cysteine 66, cysteine 32-cysteine 80, cysteine 37-cysteine 114, cysteine 43-cysteine 92, cysteine 47-cysteine 94, and cysteine 97-cysteine 104. Asparagine 24 carries an N-linked (GlcNAc...) asparagine glycan.

The protein belongs to the glycoprotein hormones subunit beta family. As to quaternary structure, heterodimer of an alpha and a beta chain.

Its subcellular location is the secreted. Its function is as follows. Involved in gametogenesis and steroidogenesis. The protein is Gonadotropin subunit beta-1 (cgba) of Fundulus heteroclitus (Killifish).